The sequence spans 364 residues: UDP-N-acetylglucosamine--N-acetylmuramyl-(pentapeptide) pyrophosphoryl-undecaprenol N-acetylglucosamine transferase (364 aa).

Residues 10-12 (TGG), Asn-124, Ser-195, Ile-250, and Gln-295 each bind UDP-N-acetyl-alpha-D-glucosamine.

This sequence belongs to the glycosyltransferase 28 family. MurG subfamily.

It is found in the cell membrane. It carries out the reaction di-trans,octa-cis-undecaprenyl diphospho-N-acetyl-alpha-D-muramoyl-L-alanyl-D-glutamyl-meso-2,6-diaminopimeloyl-D-alanyl-D-alanine + UDP-N-acetyl-alpha-D-glucosamine = di-trans,octa-cis-undecaprenyl diphospho-[N-acetyl-alpha-D-glucosaminyl-(1-&gt;4)]-N-acetyl-alpha-D-muramoyl-L-alanyl-D-glutamyl-meso-2,6-diaminopimeloyl-D-alanyl-D-alanine + UDP + H(+). Its pathway is cell wall biogenesis; peptidoglycan biosynthesis. Its function is as follows. Cell wall formation. Catalyzes the transfer of a GlcNAc subunit on undecaprenyl-pyrophosphoryl-MurNAc-pentapeptide (lipid intermediate I) to form undecaprenyl-pyrophosphoryl-MurNAc-(pentapeptide)GlcNAc (lipid intermediate II). In Bacillus cytotoxicus (strain DSM 22905 / CIP 110041 / 391-98 / NVH 391-98), this protein is UDP-N-acetylglucosamine--N-acetylmuramyl-(pentapeptide) pyrophosphoryl-undecaprenol N-acetylglucosamine transferase.